The following is a 357-amino-acid chain: Acyl-coenzyme A diphosphatase NUDT19 (357 aa).

The Nudix hydrolase domain occupies 10–242 (AATVMLAAGW…IWLAPPQFYE (233 aa)). The segment at 72-93 (PRFGLGPEPPRQPPFPGLSHGD) is disordered. The span at 78 to 87 (PEPPRQPPFP) shows a compositional bias: pro residues. Residues 97–118 (AALPDDVALRICAIREAFEEAG) carry the Nudix box motif. E112 and E116 together coordinate Mg(2+). N6-succinyllysine is present on K300. The Microbody targeting signal motif lies at 355-357 (AHL).

It belongs to the Nudix hydrolase family. In terms of assembly, monomer. Requires Mg(2+) as cofactor. It depends on Mn(2+) as a cofactor. Highly expressed in the kidneys, with lower levels in skeletal muscle and brain (at protein level).

The protein localises to the peroxisome. It catalyses the reaction an acyl-CoA + H2O = an acyl-4'-phosphopantetheine + adenosine 3',5'-bisphosphate + 2 H(+). The catalysed reaction is CoA + H2O = (R)-4'-phosphopantetheine + adenosine 3',5'-bisphosphate + 2 H(+). It carries out the reaction hexanoyl-CoA + H2O = hexanoyl-4'-phosphopantetheine + adenosine 3',5'-bisphosphate + 2 H(+). The enzyme catalyses octanoyl-CoA + H2O = S-octanoyl-4'-phosphopantetheine + adenosine 3',5'-bisphosphate + 2 H(+). It catalyses the reaction butanoyl-CoA + H2O = S-butanoyl-4'-phosphopantetheine + adenosine 3',5'-bisphosphate + 2 H(+). The catalysed reaction is propanoyl-CoA + H2O = propanoyl-4'-phosphopantetheine + adenosine 3',5'-bisphosphate + 2 H(+). It carries out the reaction malonyl-CoA + H2O = malonyl-4'-phosphopantetheine + adenosine 3',5'-bisphosphate + 2 H(+). The enzyme catalyses succinyl-CoA + H2O = succinyl-4'-phosphopantetheine + adenosine 3',5'-bisphosphate + 2 H(+). It catalyses the reaction choloyl-CoA + H2O = S-choloyl-4'-phosphopantetheine + adenosine 3',5'-bisphosphate + 2 H(+). The catalysed reaction is 4,8-dimethylnonanoyl-CoA + H2O = S-(4,8-dimethylnonanoyl)-4'-phosphopantetheine + adenosine 3',5'-bisphosphate + 2 H(+). It carries out the reaction (9Z,12Z,15Z)-octadecatrienoyl-CoA + H2O = S-(9Z,12Z,15Z-octadecatrienoyl)-4'-phosphopantetheine + adenosine 3',5'-bisphosphate + 2 H(+). The enzyme catalyses (9Z,12Z)-octadecadienoyl-CoA + H2O = S-(9Z,12Z-octadecadienoyl)-4'-phosphopantetheine + adenosine 3',5'-bisphosphate + 2 H(+). It catalyses the reaction (9Z)-hexadecenoyl-CoA + H2O = S-(9Z-hexadecenoyl)-4'-phosphopantetheine + adenosine 3',5'-bisphosphate + 2 H(+). The catalysed reaction is (9Z)-tetradecenoyl-CoA + H2O = S-(9Z-tetradecenoyl)-4'-phosphopantetheine + adenosine 3',5'-bisphosphate + 2 H(+). It carries out the reaction (6Z)-octenoyl-CoA + H2O = S-(6Z-octenoyl)-4'-phosphopantetheine + adenosine 3',5'-bisphosphate + 2 H(+). The enzyme catalyses hexadecanoyl-CoA + H2O = S-hexadecanoyl-4'-phosphopantetheine + adenosine 3',5'-bisphosphate + 2 H(+). It catalyses the reaction tetradecanoyl-CoA + H2O = tetradecanoyl-4'-phosphopantetheine + adenosine 3',5'-bisphosphate + 2 H(+). The catalysed reaction is dodecanoyl-CoA + H2O = S-dodecanoyl-4'-phosphopantetheine + adenosine 3',5'-bisphosphate + 2 H(+). It carries out the reaction a 5'-end CoA-ribonucleoside in mRNA + H2O = a 5'-end phospho-adenosine-phospho-ribonucleoside in mRNA + (R)-4'-phosphopantetheine + 2 H(+). With respect to regulation, inhibited by chenodeoxycholic acid (CDCA) and its conjugated derivatives, taurochenodeoxycholic acid and glycochenodeoxycholic acid. Inhibited by fluoride. Functionally, fatty acyl-coenzyme A (CoA) diphosphatase that hydrolyzes fatty acyl-CoA to yield acyl-4'-phosphopantetheine and adenosine 3',5'-bisphosphate. Mediates the hydrolysis of a wide range of CoA esters, including choloyl-CoA and branched-chain fatty-acyl-CoA esters and at low substrate concentrations medium and long-chain fatty-acyl-CoA esters are the primary substrates. Highest activity seen with medium-chain acyl-CoA esters and higher rates of activity seen with the unsaturated acyl-CoA esters compared with the saturated esters. Exhibits decapping activity towards dpCoA-capped RNAs in vitro. The polypeptide is Acyl-coenzyme A diphosphatase NUDT19 (Nudt19) (Mus musculus (Mouse)).